The chain runs to 510 residues: ATP synthase subunit alpha, mitochondrial (510 aa).

ATP is bound at residue 171 to 178 (GDRQTGKT).

It belongs to the ATPase alpha/beta chains family. F-type ATPases have 2 components, CF(1) - the catalytic core - and CF(0) - the membrane proton channel. CF(1) has five subunits: alpha(3), beta(3), gamma(1), delta(1), epsilon(1). CF(0) has three main subunits: a, b and c.

The protein resides in the mitochondrion. The protein localises to the mitochondrion inner membrane. Mitochondrial membrane ATP synthase (F(1)F(0) ATP synthase or Complex V) produces ATP from ADP in the presence of a proton gradient across the membrane which is generated by electron transport complexes of the respiratory chain. F-type ATPases consist of two structural domains, F(1) - containing the extramembraneous catalytic core, and F(0) - containing the membrane proton channel, linked together by a central stalk and a peripheral stalk. During catalysis, ATP synthesis in the catalytic domain of F(1) is coupled via a rotary mechanism of the central stalk subunits to proton translocation. Subunits alpha and beta form the catalytic core in F(1). Rotation of the central stalk against the surrounding alpha(3)beta(3) subunits leads to hydrolysis of ATP in three separate catalytic sites on the beta subunits. Subunit alpha does not bear the catalytic high-affinity ATP-binding sites. The polypeptide is ATP synthase subunit alpha, mitochondrial (ATPA) (Helianthus annuus (Common sunflower)).